The chain runs to 349 residues: NADH-quinone oxidoreductase subunit H (349 aa).

Helical transmembrane passes span 11 to 31, 83 to 103, 116 to 136, 162 to 182, 200 to 220, 252 to 272, 288 to 308, and 323 to 343; these read FPLL…LLLV, GVFL…WAVI, VGLL…IMGG, IGFV…TTIV, FLDW…ISAL, LFFL…TILF, VPGI…FAMV, and LGWK…AAFL.

The protein belongs to the complex I subunit 1 family. As to quaternary structure, NDH-1 is composed of 14 different subunits. Subunits NuoA, H, J, K, L, M, N constitute the membrane sector of the complex.

It is found in the cell inner membrane. The enzyme catalyses a quinone + NADH + 5 H(+)(in) = a quinol + NAD(+) + 4 H(+)(out). In terms of biological role, NDH-1 shuttles electrons from NADH, via FMN and iron-sulfur (Fe-S) centers, to quinones in the respiratory chain. The immediate electron acceptor for the enzyme in this species is believed to be ubiquinone. Couples the redox reaction to proton translocation (for every two electrons transferred, four hydrogen ions are translocated across the cytoplasmic membrane), and thus conserves the redox energy in a proton gradient. This subunit may bind ubiquinone. The protein is NADH-quinone oxidoreductase subunit H of Bartonella henselae (strain ATCC 49882 / DSM 28221 / CCUG 30454 / Houston 1) (Rochalimaea henselae).